Here is a 225-residue protein sequence, read N- to C-terminus: Glutathione S-transferase zeta class (225 aa).

Residues P10 to P91 enclose the GST N-terminal domain. Glutathione contacts are provided by residues S20–R25, Q49, V63, D75–S76, Q115, and N119–A121. In terms of domain architecture, GST C-terminal spans D96–S221.

This sequence belongs to the GST superfamily. Zeta family.

It is found in the cytoplasm. It carries out the reaction RX + glutathione = an S-substituted glutathione + a halide anion + H(+). This chain is Glutathione S-transferase zeta class, found in Euphorbia esula (Leafy spurge).